A 160-amino-acid chain; its full sequence is UPF0262 protein BCAN_A0255 (160 aa).

It belongs to the UPF0262 family.

This chain is UPF0262 protein BCAN_A0255, found in Brucella canis (strain ATCC 23365 / NCTC 10854 / RM-666).